The sequence spans 204 residues: Large ribosomal subunit protein uL22m (204 aa).

A mitochondrion-targeting transit peptide spans 1-38 (MAAVILERLGALWVQNLRGKLALGILPQSHIHTSASLE).

This sequence belongs to the universal ribosomal protein uL22 family. Component of the mitochondrial ribosome large subunit (39S) which comprises a 16S rRNA and about 50 distinct proteins.

It is found in the mitochondrion. This chain is Large ribosomal subunit protein uL22m (MRPL22), found in Bos taurus (Bovine).